The primary structure comprises 125 residues: Fluoride-specific ion channel FluC (125 aa).

4 consecutive transmembrane segments (helical) span residues Ile5 to Leu25, Ile33 to Val53, Val66 to Leu86, and Leu100 to Ile120. 2 residues coordinate Na(+): Gly76 and Thr79.

Belongs to the fluoride channel Fluc/FEX (TC 1.A.43) family.

The protein localises to the cell inner membrane. It catalyses the reaction fluoride(in) = fluoride(out). With respect to regulation, na(+) is not transported, but it plays an essential structural role and its presence is essential for fluoride channel function. Fluoride-specific ion channel. Important for reducing fluoride concentration in the cell, thus reducing its toxicity. The sequence is that of Fluoride-specific ion channel FluC from Azobacteroides pseudotrichonymphae genomovar. CFP2.